Reading from the N-terminus, the 270-residue chain is Formamidopyrimidine-DNA glycosylase (270 aa).

P2 serves as the catalytic Schiff-base intermediate with DNA. The Proton donor role is filled by E3. K58 acts as the Proton donor; for beta-elimination activity in catalysis. DNA-binding residues include H91, R110, and K151. An FPG-type zinc finger spans residues 236–270 (LVYGKAGAPCTECNTPLKEIRMNNRSTVYCPRCQR). Residue R260 is the Proton donor; for delta-elimination activity of the active site.

The protein belongs to the FPG family. In terms of assembly, monomer. Requires Zn(2+) as cofactor.

It carries out the reaction Hydrolysis of DNA containing ring-opened 7-methylguanine residues, releasing 2,6-diamino-4-hydroxy-5-(N-methyl)formamidopyrimidine.. It catalyses the reaction 2'-deoxyribonucleotide-(2'-deoxyribose 5'-phosphate)-2'-deoxyribonucleotide-DNA = a 3'-end 2'-deoxyribonucleotide-(2,3-dehydro-2,3-deoxyribose 5'-phosphate)-DNA + a 5'-end 5'-phospho-2'-deoxyribonucleoside-DNA + H(+). Its function is as follows. Involved in base excision repair of DNA damaged by oxidation or by mutagenic agents. Acts as a DNA glycosylase that recognizes and removes damaged bases. Has a preference for oxidized purines, such as 7,8-dihydro-8-oxoguanine (8-oxoG). Has AP (apurinic/apyrimidinic) lyase activity and introduces nicks in the DNA strand. Cleaves the DNA backbone by beta-delta elimination to generate a single-strand break at the site of the removed base with both 3'- and 5'-phosphates. This Marinobacter nauticus (strain ATCC 700491 / DSM 11845 / VT8) (Marinobacter aquaeolei) protein is Formamidopyrimidine-DNA glycosylase.